The chain runs to 610 residues: Phosphomethylpyrimidine synthase (610 aa).

Substrate contacts are provided by residues N216, M245, Y274, H310, 330–332, 371–374, and E410; these read SRG and DGLR. H414 contributes to the Zn(2+) binding site. Y437 contributes to the substrate binding site. H478 provides a ligand contact to Zn(2+). C558, C561, and C566 together coordinate [4Fe-4S] cluster.

Belongs to the ThiC family. As to quaternary structure, homodimer. It depends on [4Fe-4S] cluster as a cofactor.

It carries out the reaction 5-amino-1-(5-phospho-beta-D-ribosyl)imidazole + S-adenosyl-L-methionine = 4-amino-2-methyl-5-(phosphooxymethyl)pyrimidine + CO + 5'-deoxyadenosine + formate + L-methionine + 3 H(+). The protein operates within cofactor biosynthesis; thiamine diphosphate biosynthesis. Its function is as follows. Catalyzes the synthesis of the hydroxymethylpyrimidine phosphate (HMP-P) moiety of thiamine from aminoimidazole ribotide (AIR) in a radical S-adenosyl-L-methionine (SAM)-dependent reaction. This is Phosphomethylpyrimidine synthase from Allorhizobium ampelinum (strain ATCC BAA-846 / DSM 112012 / S4) (Agrobacterium vitis (strain S4)).